The primary structure comprises 345 residues: MRVDLFDFDLPRDLIAVRPAVPRDSARLLLVEGESRRDLGVGDLPGLLDPGDILVFNDTRVIPARLKGRIGDGGVEVTLHKRVGPDAWDCFARPARKLKPGVVILFAEGFTATVAARGEDGEATLRFDRAGAALMAALEAYGHIPLPPYIKRPDDARDRADYQTIYAREDGAVAAPTAGLHFTPALLAALEARGVSRAMVTLHVGAGTFLPVKVEDTDDHRMHAETGTLTAQTAEAINAARAAGGKVVAVGTTAMRLLESATGADKVIRPFHGDTSIFITPGYRFNAVDRLMTNFHLPRSTLFMLVSAFAGASRMRNAYAHAISQGYRFYSYGDSSLLSHAEDPR.

It belongs to the QueA family. Monomer.

The protein localises to the cytoplasm. The enzyme catalyses 7-aminomethyl-7-carbaguanosine(34) in tRNA + S-adenosyl-L-methionine = epoxyqueuosine(34) in tRNA + adenine + L-methionine + 2 H(+). It functions in the pathway tRNA modification; tRNA-queuosine biosynthesis. In terms of biological role, transfers and isomerizes the ribose moiety from AdoMet to the 7-aminomethyl group of 7-deazaguanine (preQ1-tRNA) to give epoxyqueuosine (oQ-tRNA). This chain is S-adenosylmethionine:tRNA ribosyltransferase-isomerase, found in Rhodospirillum rubrum (strain ATCC 11170 / ATH 1.1.1 / DSM 467 / LMG 4362 / NCIMB 8255 / S1).